The sequence spans 774 residues: Dapper homolog 2 (774 aa).

Residues proline 67–lysine 93 adopt a coiled-coil conformation. Disordered regions lie at residues arginine 188 to alanine 225, threonine 295 to threonine 319, threonine 345 to lysine 500, and cysteine 624 to serine 710. The segment covering valine 438–alanine 452 has biased composition (polar residues). Over residues arginine 637–proline 648 the composition is skewed to low complexity. 2 stretches are compositionally biased toward basic and acidic residues: residues alanine 655–proline 672 and serine 686–serine 700. Positions methionine 771–valine 774 match the PDZ-binding motif.

This sequence belongs to the dapper family. Can form homodimers and heterodimers with DACT1 or DACT3. Interacts with CSNK1D, PKA catalytic subunit, PKC-type kinase, CSNK2B, DVL1, DVL2, DVL3, VANGL1, VANGL2, TGFBR1, CTNNB1, CTNND2, CTNND1, LEF1, TCF7, TCF7L1 and HDAC1.

Functionally, involved in regulation of intracellular signaling pathways during development. Negatively regulates the Nodal signaling pathway, possibly by promoting the lysosomal degradation of Nodal receptors, such as TGFBR1. May be involved in control of the morphogenetic behavior of kidney ureteric bud cells by keeping cells epithelial and restraining their mesenchymal character. May play an inhibitory role in the re-epithelialization of skin wounds by attenuating TGF-beta signaling. The sequence is that of Dapper homolog 2 (DACT2) from Homo sapiens (Human).